The primary structure comprises 110 residues: Large ribosomal subunit protein uL22 (110 aa).

The protein belongs to the universal ribosomal protein uL22 family. As to quaternary structure, part of the 50S ribosomal subunit.

Functionally, this protein binds specifically to 23S rRNA; its binding is stimulated by other ribosomal proteins, e.g. L4, L17, and L20. It is important during the early stages of 50S assembly. It makes multiple contacts with different domains of the 23S rRNA in the assembled 50S subunit and ribosome. Its function is as follows. The globular domain of the protein is located near the polypeptide exit tunnel on the outside of the subunit, while an extended beta-hairpin is found that lines the wall of the exit tunnel in the center of the 70S ribosome. The sequence is that of Large ribosomal subunit protein uL22 from Hydrogenovibrio crunogenus (strain DSM 25203 / XCL-2) (Thiomicrospira crunogena).